The sequence spans 335 residues: Homeobox protein DBX1 (335 aa).

Disordered regions lie at residues 56–102 (RSIP…LSPA) and 240–335 (KERE…ITVS). Positions 83–95 (GSPGSGSRRGSSP) are enriched in low complexity. The segment at residues 181–240 (GMLRRAVFSDVQRKALEKTFQKQKYISKPDRKKLASKLGLKDSQVKIWFQNRRMKWRNSK) is a DNA-binding region (homeobox). Low complexity predominate over residues 299–317 (GPLPASPAHSSSPGKPSDF). Residues 318 to 335 (SDSDEDEEGEEDEEITVS) are compositionally biased toward acidic residues.

This sequence belongs to the H2.0 homeobox family.

The protein resides in the nucleus. In terms of biological role, could have a role in patterning the central nervous system during embryogenesis. Has a key role in regulating the distinct phenotypic features that distinguish two major classes of ventral interneurons, V0 and V1 neurons. Regulates the transcription factor profile, neurotransmitter phenotype, intraspinal migratory path and axonal trajectory of V0 neurons, features that differentiate them from an adjacent set of V1 neurons. The polypeptide is Homeobox protein DBX1 (Dbx1) (Rattus norvegicus (Rat)).